Reading from the N-terminus, the 438-residue chain is Glutamyl-tRNA(Gln) amidotransferase subunit D (438 aa).

Residues Lys-91–Asn-421 enclose the Asparaginase/glutaminase domain. Catalysis depends on residues Thr-101, Thr-177, Asp-178, and Lys-254.

The protein belongs to the asparaginase 1 family. GatD subfamily. Heterodimer of GatD and GatE.

The enzyme catalyses L-glutamyl-tRNA(Gln) + L-glutamine + ATP + H2O = L-glutaminyl-tRNA(Gln) + L-glutamate + ADP + phosphate + H(+). Allows the formation of correctly charged Gln-tRNA(Gln) through the transamidation of misacylated Glu-tRNA(Gln) in organisms which lack glutaminyl-tRNA synthetase. The reaction takes place in the presence of glutamine and ATP through an activated gamma-phospho-Glu-tRNA(Gln). The GatDE system is specific for glutamate and does not act on aspartate. The protein is Glutamyl-tRNA(Gln) amidotransferase subunit D of Methanosphaera stadtmanae (strain ATCC 43021 / DSM 3091 / JCM 11832 / MCB-3).